The sequence spans 452 residues: Bifunctional protein GlmU (452 aa).

Positions 1 to 226 are pyrophosphorylase; the sequence is MSLTTVILAA…PMEVEGANNR (226 aa). UDP-N-acetyl-alpha-D-glucosamine is bound by residues 8 to 11, Lys-22, Gln-73, 78 to 79, 100 to 102, Gly-137, Glu-151, Asn-166, and Asn-224; these read LAAG, GT, and YGD. Asp-102 is a binding site for Mg(2+). Position 224 (Asn-224) interacts with Mg(2+). Residues 227–247 form a linker region; the sequence is IQLAGLERAYQAWQAQELMLN. An N-acetyltransferase region spans residues 248 to 452; that stretch reads GATLADPARI…LDGWKRPVKK (205 aa). UDP-N-acetyl-alpha-D-glucosamine-binding residues include Arg-330 and Lys-348. The active-site Proton acceptor is His-360. UDP-N-acetyl-alpha-D-glucosamine-binding residues include Tyr-363 and Asn-374. Acetyl-CoA is bound by residues Ala-377, 383-384, Ser-402, Ala-420, and Arg-437; that span reads NY.

The protein in the N-terminal section; belongs to the N-acetylglucosamine-1-phosphate uridyltransferase family. In the C-terminal section; belongs to the transferase hexapeptide repeat family. In terms of assembly, homotrimer. Mg(2+) is required as a cofactor.

It is found in the cytoplasm. It catalyses the reaction alpha-D-glucosamine 1-phosphate + acetyl-CoA = N-acetyl-alpha-D-glucosamine 1-phosphate + CoA + H(+). The catalysed reaction is N-acetyl-alpha-D-glucosamine 1-phosphate + UTP + H(+) = UDP-N-acetyl-alpha-D-glucosamine + diphosphate. Its pathway is nucleotide-sugar biosynthesis; UDP-N-acetyl-alpha-D-glucosamine biosynthesis; N-acetyl-alpha-D-glucosamine 1-phosphate from alpha-D-glucosamine 6-phosphate (route II): step 2/2. The protein operates within nucleotide-sugar biosynthesis; UDP-N-acetyl-alpha-D-glucosamine biosynthesis; UDP-N-acetyl-alpha-D-glucosamine from N-acetyl-alpha-D-glucosamine 1-phosphate: step 1/1. It participates in bacterial outer membrane biogenesis; LPS lipid A biosynthesis. Functionally, catalyzes the last two sequential reactions in the de novo biosynthetic pathway for UDP-N-acetylglucosamine (UDP-GlcNAc). The C-terminal domain catalyzes the transfer of acetyl group from acetyl coenzyme A to glucosamine-1-phosphate (GlcN-1-P) to produce N-acetylglucosamine-1-phosphate (GlcNAc-1-P), which is converted into UDP-GlcNAc by the transfer of uridine 5-monophosphate (from uridine 5-triphosphate), a reaction catalyzed by the N-terminal domain. The protein is Bifunctional protein GlmU of Pseudoalteromonas translucida (strain TAC 125).